The following is a 129-amino-acid chain: Cocaine- and amphetamine-regulated transcript protein (129 aa).

Residues 1 to 27 (MESSRLRLLPVLGAALLLLLPLLGAGA) form the signal peptide. Tyrosine 41 is subject to Phosphotyrosine. Serine 48 is modified (phosphoserine). Intrachain disulfides connect cysteine 95–cysteine 113, cysteine 101–cysteine 121, and cysteine 115–cysteine 128.

The protein belongs to the CART family. Neuroendocrine tissues. Predominantly expressed in the hypothalamus, pituitary, and longitudinal muscle-myenteric plexus. Abundant expression is also seen in the midbrain/thalamus and eye. A lower level expression is seen in the other brain regions and adrenal.

The protein localises to the secreted. Functionally, satiety factor closely associated with the actions of leptin and neuropeptide y; this anorectic peptide inhibits both normal and starvation-induced feeding and completely blocks the feeding response induced by neuropeptide Y and regulated by leptin in the hypothalamus. This chain is Cocaine- and amphetamine-regulated transcript protein (Cartpt), found in Rattus norvegicus (Rat).